The following is an 858-amino-acid chain: Piwi-like protein 1 (858 aa).

Residues 1-13 show a composition bias toward basic residues; the sequence is MTGRARARSRGRG. The tract at residues 1–56 is disordered; the sequence is MTGRARARSRGRGRGQEPAAPGAQPPVSQEAAKPVVSTPSEGQLVGRGRQKPAPGA. Residues 16–26 are compositionally biased toward low complexity; it reads QEPAAPGAQPP. The PAZ domain occupies 276–388; sequence TVLDFMYSLR…LVPEFCYLTG (113 aa). Residues 314–316 form a required for binding 2'-O-methylated 3'-end of piRNAs region; sequence TYR. The interval 476-612 is MID region; the sequence is SKEMRGLPLI…LQMNCKMGGE (137 aa). Residues 552–844 form the Piwi domain; sequence MVVVILPTNR…LAFLVGQSIH (293 aa). Active-site residues include D629, E667, D699, and H833.

It belongs to the argonaute family. Piwi subfamily. It depends on Mg(2+) as a cofactor. In terms of processing, methylated on arginine residues; required for the interaction with Tudor domain-containing protein and subsequent localization to the meiotic nuage, also named P granule. Expressed exclusively in the adult gonads; expression in the ovary weaker than in the testis (at protein level). During neurogenesis and organogenesis, expression is detected in CNS (midbrain and eye) and fin buds. Starting from 24 hours post-fertilization, expression is found in the genital ridge.

It localises to the cytoplasm. Plays a central role during gametogenesis by repressing transposable elements and preventing their mobilization, which is essential for the germline integrity. Acts via the piRNA metabolic process, which mediates the repression of transposable elements during meiosis by forming complexes composed of piRNAs and Piwi proteins and governs the methylation and subsequent repression of transposons. Directly binds methylated piRNAs, a class of 24 to 30 nucleotide RNAs that are generated by a Dicer-independent mechanism and are primarily derived from transposons and other repeated sequence elements. Has a strong preference for piRNAs with a uridine nucleotide at their 5'-end (g1U preference, also named 1U-bias) and binds piRNAs in an opposite direction compared to piwil2/zili. Participates in a piRNA amplification loop with piwil2/zili. Not involved in the piRNA amplification loop, also named ping-pong amplification cycle. Acts as an endoribonuclease that cleaves transposon messenger RNAs. The sequence is that of Piwi-like protein 1 (piwil1) from Danio rerio (Zebrafish).